The chain runs to 408 residues: Aminoacylase-1 (408 aa).

His76 provides a ligand contact to Zn(2+). Residue Asp78 is part of the active site. Position 109 (Asp109) interacts with Zn(2+). Glu143 (proton acceptor) is an active-site residue. Positions 144, 172, and 379 each coordinate Zn(2+).

It belongs to the peptidase M20A family. Homodimer. Requires Zn(2+) as cofactor.

It is found in the cytoplasm. It catalyses the reaction an N-acyl-L-amino acid + H2O = an L-alpha-amino acid + a carboxylate. The enzyme catalyses an N-acetyl-L-cysteine-S-conjugate + H2O = an S-substituted L-cysteine + acetate. Functionally, involved in the hydrolysis of N-acylated or N-acetylated amino acids (except L-aspartate). The sequence is that of Aminoacylase-1 (acy1) from Dictyostelium discoideum (Social amoeba).